Reading from the N-terminus, the 357-residue chain is Anthranilate phosphoribosyltransferase (357 aa).

5-phospho-alpha-D-ribose 1-diphosphate-binding positions include G91, 94-95 (GD), T99, 101-104 (NIST), 119-127 (KHGNRSVSS), and S131. An anthranilate-binding site is contributed by G91. Residue S103 coordinates Mg(2+). N122 contributes to the anthranilate binding site. R177 serves as a coordination point for anthranilate. Mg(2+)-binding residues include D235 and E236.

The protein belongs to the anthranilate phosphoribosyltransferase family. Homodimer. Requires Mg(2+) as cofactor.

It carries out the reaction N-(5-phospho-beta-D-ribosyl)anthranilate + diphosphate = 5-phospho-alpha-D-ribose 1-diphosphate + anthranilate. The protein operates within amino-acid biosynthesis; L-tryptophan biosynthesis; L-tryptophan from chorismate: step 2/5. Functionally, catalyzes the transfer of the phosphoribosyl group of 5-phosphorylribose-1-pyrophosphate (PRPP) to anthranilate to yield N-(5'-phosphoribosyl)-anthranilate (PRA). This is Anthranilate phosphoribosyltransferase from Shewanella baltica (strain OS155 / ATCC BAA-1091).